A 289-amino-acid polypeptide reads, in one-letter code: MPARASRPAPGLPARAGLGFKPEHYATLVEQPPDLGFFEIHAENYMVPGGPAHAQLAWLRERYAISVHGVGLSLGGHDPLDARLLAGHRQLQRRYAPDSISEHLAWSRHDGRYFNDLLPIVYDDAALRRVCAHIDQFQQCLGQPILLENPATYVRFEASHIDEAQFLCELVARTGCGLLLDVNNVYVSAVNHGFDARAYLARLPLAAVGEIHLAGHARQRDAHGRAVLIDSHDAPVDEAVWDLYEYTLALTGPVATLLERDGNIPPLAGLLAETGRVTACLARGLALAA.

Belongs to the UPF0276 family.

The sequence is that of UPF0276 protein BP2925 from Bordetella pertussis (strain Tohama I / ATCC BAA-589 / NCTC 13251).